Reading from the N-terminus, the 116-residue chain is Large ribosomal subunit protein bL17 (116 aa).

Belongs to the bacterial ribosomal protein bL17 family. Part of the 50S ribosomal subunit. Contacts protein L32.

This is Large ribosomal subunit protein bL17 from Deinococcus geothermalis (strain DSM 11300 / CIP 105573 / AG-3a).